Here is a 193-residue protein sequence, read N- to C-terminus: MDSEFFQPVYPRHYGECLSPVSTPSFFSTHMYTILIAIVVLVIIIIVLIYLFSSRKKKAAAAIEEEDIQFINPYQDQQWVEVTPQPGTSKPAGATTASVGKPVTGRPATNRPVTDRPATNNPVTDRLVMATGGPAAASAAASAAASAAASAPAHPAEPYTTVTTQNTASQTMSAIENLRQRSTYTHKDLENSL.

A helical membrane pass occupies residues 32–52 (YTILIAIVVLVIIIIVLIYLF). A disordered region spans residues 84–126 (PQPGTSKPAGATTASVGKPVTGRPATNRPVTDRPATNNPVTDR). A run of 4 repeats spans residues 135 to 138 (AAAS), 139 to 142 (AAAS), 143 to 146 (AAAS), and 147 to 150 (AAAS). The segment at 135–150 (AAASAAASAAASAAAS) is 4 X 4 AA tandem repeats of A-A-A-S. Residues 159-171 (YTTVTTQNTASQT) form an interaction with host DYNLL1 region.

The protein belongs to the asfivirus envelope protein p54 family. Interacts with the host light chain cytoplasmic dynein DYNLL1; this interaction is critical for intracellular microtubule-dependent virus transport toward viral factories.

The protein localises to the virion membrane. The protein resides in the host cytoplasm. It is found in the host cytoskeleton. Its subcellular location is the host endoplasmic reticulum membrane. Functionally, inner envelope protein involved, through its interaction with host dynein, in the intracellular microtubule-dependent transport of viral capsid toward viral factories. Seems to induce caspase-3 activation and apoptosis. Plays a role in virion morphogenesis by recruiting and transforming the host ER membranes into the precursors of the viral envelope. Involved in virus attachment to the host cell. This Ornithodoros (relapsing fever ticks) protein is Inner membrane protein p54.